The chain runs to 213 residues: Uridine kinase (213 aa).

Position 15–22 (15–22) interacts with ATP; that stretch reads GASASGKS.

The protein belongs to the uridine kinase family.

It is found in the cytoplasm. The catalysed reaction is uridine + ATP = UMP + ADP + H(+). It catalyses the reaction cytidine + ATP = CMP + ADP + H(+). It functions in the pathway pyrimidine metabolism; CTP biosynthesis via salvage pathway; CTP from cytidine: step 1/3. Its pathway is pyrimidine metabolism; UMP biosynthesis via salvage pathway; UMP from uridine: step 1/1. This is Uridine kinase from Klebsiella pneumoniae (strain 342).